The following is a 624-amino-acid chain: Dihydroxy-acid dehydratase (624 aa).

Asp81 contributes to the Mg(2+) binding site. Cys122 is a binding site for [2Fe-2S] cluster. The Mg(2+) site is built by Asp123 and Lys124. Lys124 is subject to N6-carboxylysine. Cys195 contributes to the [2Fe-2S] cluster binding site. Residue Glu499 coordinates Mg(2+). Ser525 acts as the Proton acceptor in catalysis.

The protein belongs to the IlvD/Edd family. In terms of assembly, homodimer. [2Fe-2S] cluster serves as cofactor. Mg(2+) is required as a cofactor.

The enzyme catalyses (2R)-2,3-dihydroxy-3-methylbutanoate = 3-methyl-2-oxobutanoate + H2O. The catalysed reaction is (2R,3R)-2,3-dihydroxy-3-methylpentanoate = (S)-3-methyl-2-oxopentanoate + H2O. Its pathway is amino-acid biosynthesis; L-isoleucine biosynthesis; L-isoleucine from 2-oxobutanoate: step 3/4. It participates in amino-acid biosynthesis; L-valine biosynthesis; L-valine from pyruvate: step 3/4. Its function is as follows. Functions in the biosynthesis of branched-chain amino acids. Catalyzes the dehydration of (2R,3R)-2,3-dihydroxy-3-methylpentanoate (2,3-dihydroxy-3-methylvalerate) into 2-oxo-3-methylpentanoate (2-oxo-3-methylvalerate) and of (2R)-2,3-dihydroxy-3-methylbutanoate (2,3-dihydroxyisovalerate) into 2-oxo-3-methylbutanoate (2-oxoisovalerate), the penultimate precursor to L-isoleucine and L-valine, respectively. The sequence is that of Dihydroxy-acid dehydratase from Shewanella baltica (strain OS185).